The chain runs to 161 residues: Small ribosomal subunit protein uS19 (161 aa).

Positions 1–19 (MARQKKYSGKGGARKKNKQ) are enriched in basic residues. A disordered region spans residues 1–26 (MARQKKYSGKGGARKKNKQKQSVAPR).

It belongs to the universal ribosomal protein uS19 family.

Its function is as follows. Protein S19 forms a complex with S13 that binds strongly to the 16S ribosomal RNA. This Methanococcus maripaludis (strain C6 / ATCC BAA-1332) protein is Small ribosomal subunit protein uS19.